The sequence spans 224 residues: Oxalate oxidase GF-2.8 (224 aa).

The N-terminal stretch at 1–23 is a signal peptide; that stretch reads MGYSKTLVAGLFAMLLLAPAVLA. An intrachain disulfide couples Cys-33 to Cys-49. The Cupin type-1 domain occupies 63–214; sequence SKLAKAGNTS…ALRVEARVVE (152 aa). Asn-70 and Asn-75 each carry an N-linked (GlcNAc...) asparagine glycan. Residues His-111, His-113, Glu-118, and His-160 each contribute to the Mn(2+) site.

This sequence belongs to the germin family. Oligomer (believed to be a pentamer but probably hexamer).

It is found in the secreted. The protein localises to the extracellular space. It localises to the apoplast. The protein resides in the cytoplasm. Its subcellular location is the cell wall. It carries out the reaction oxalate + O2 + 2 H(+) = H2O2 + 2 CO2. In terms of biological role, produces developmental and stress-related release of hydrogen peroxide in the apoplast. May play an important role in several aspects of plant growth and defense mechanisms. The protein is Oxalate oxidase GF-2.8 of Triticum aestivum (Wheat).